The primary structure comprises 56 residues: Large ribosomal subunit protein bL32 (56 aa).

The disordered stretch occupies residues 1–37 (MAVQQNKKSRSKRGMRRSHDALSTAQLSVDATSGELH). Positions 7 to 16 (KKSRSKRGMR) are enriched in basic residues. Residues 21–31 (ALSTAQLSVDA) show a composition bias toward polar residues.

The protein belongs to the bacterial ribosomal protein bL32 family.

The sequence is that of Large ribosomal subunit protein bL32 from Shewanella pealeana (strain ATCC 700345 / ANG-SQ1).